We begin with the raw amino-acid sequence, 139 residues long: uncharacterized protein (139 aa).

A helical transmembrane segment spans residues 77 to 97; the sequence is YCFFFFLVLFLNGIIATRGKA.

It localises to the mitochondrion membrane. This is an uncharacterized protein from Arabidopsis thaliana (Mouse-ear cress).